Reading from the N-terminus, the 1056-residue chain is Kinesin-like protein KIF11 (1056 aa).

The 342-residue stretch at 18 to 359 folds into the Kinesin motor domain; that stretch reads NIQVVVRCRP…LEYAHRAKNI (342 aa). Residue 105-112 coordinates ATP; the sequence is GQTGTGKT. Lys-146 carries the N6-acetyllysine modification. Coiled coils occupy residues 364–480 and 736–763; these read EVNQ…KEEY and LEEK…DIVN. Thr-458 is subject to Phosphothreonine. Lys-477 is covalently cross-linked (Glycyl lysine isopeptide (Lys-Gly) (interchain with G-Cter in SUMO2)). Position 925 is a phosphothreonine (Thr-925). Thr-926 carries the post-translational modification Phosphothreonine; by CDK1. Ser-1033 is subject to Phosphoserine; by NEK6. Lys-1034 participates in a covalent cross-link: Glycyl lysine isopeptide (Lys-Gly) (interchain with G-Cter in ubiquitin).

It belongs to the TRAFAC class myosin-kinesin ATPase superfamily. Kinesin family. BimC subfamily. In terms of assembly, interacts with the thyroid hormone receptor in the presence of thyroid hormone. Component of a large chromatin remodeling complex, at least composed of MYSM1, PCAF, RBM10 and KIF11/TRIP5. Interacts (via C-terminus) with the kinase NEK6 in both interphase and mitosis. Interacts with RARRES1 and AGBL2. Interacts with TPX2. In terms of processing, phosphorylated exclusively on serine during S phase, but on both serine and Thr-926 during mitosis, so controlling the association of KIF11 with the spindle apparatus (probably during early prophase). A subset of this protein primarily localized at the spindle pole is phosphorylated by NEK6 during mitosis; phosphorylation is required for mitotic function. Post-translationally, ubiquitinated at Lys-1034 by UHRF1 via 'Lys-63'-linked ubiquitin chains, leading to interaction with spindle assembly factor TPX2, thereby ensuring accurate distribution to the spindles during metaphase.

The protein resides in the cytoplasm. Its subcellular location is the cytoskeleton. It localises to the spindle pole. Functionally, motor protein required for establishing a bipolar spindle and thus contributing to chromosome congression during mitosis. Required in non-mitotic cells for transport of secretory proteins from the Golgi complex to the cell surface. This chain is Kinesin-like protein KIF11 (KIF11), found in Homo sapiens (Human).